The primary structure comprises 230 residues: Thymidylate kinase (230 aa).

An ATP-binding site is contributed by 23–30 (GIDGAGKT).

It belongs to the thymidylate kinase family.

It catalyses the reaction dTMP + ATP = dTDP + ADP. Its function is as follows. Phosphorylation of dTMP to form dTDP in both de novo and salvage pathways of dTTP synthesis. The chain is Thymidylate kinase from Ureaplasma parvum serovar 3 (strain ATCC 27815 / 27 / NCTC 11736).